The sequence spans 105 residues: Large ribosomal subunit protein uL24 (105 aa).

Belongs to the universal ribosomal protein uL24 family. As to quaternary structure, part of the 50S ribosomal subunit.

In terms of biological role, one of two assembly initiator proteins, it binds directly to the 5'-end of the 23S rRNA, where it nucleates assembly of the 50S subunit. One of the proteins that surrounds the polypeptide exit tunnel on the outside of the subunit. In Xylella fastidiosa (strain M12), this protein is Large ribosomal subunit protein uL24.